The sequence spans 675 residues: Putative L-type lectin-domain containing receptor kinase I.11 (675 aa).

An N-terminal signal peptide occupies residues 1–22; the sequence is MASERLHLILLVFFNHLTFLLS. Over 23-292 the chain is Extracellular; that stretch reads QQEEAGFIYN…PKAKQEQTSP (270 aa). The tract at residues 27-263 is legume-lectin like; the sequence is AGFIYNGFGQ…YQYILGWSFS (237 aa). 5 N-linked (GlcNAc...) asparagine glycosylation sites follow: N60, N129, N186, N209, and N230. A helical transmembrane segment spans residues 293 to 313; it reads LLIVLLMLLVLIMLAVLGGIY. At 314–675 the chain is on the cytoplasmic side; sequence LYRRKKYAEV…THTITYGDGR (362 aa). The 273-residue stretch at 348 to 620 folds into the Protein kinase domain; that stretch reads FDKDGRLGKG…QVIQYINQNL (273 aa). Residues 354–362 and K376 each bind ATP; that span reads LGKGGFGEV. The active-site Proton acceptor is D472.

It in the C-terminal section; belongs to the protein kinase superfamily. Ser/Thr protein kinase family. This sequence in the N-terminal section; belongs to the leguminous lectin family.

It localises to the cell membrane. It catalyses the reaction L-seryl-[protein] + ATP = O-phospho-L-seryl-[protein] + ADP + H(+). The catalysed reaction is L-threonyl-[protein] + ATP = O-phospho-L-threonyl-[protein] + ADP + H(+). The chain is Putative L-type lectin-domain containing receptor kinase I.11 (LECRK111) from Arabidopsis thaliana (Mouse-ear cress).